The primary structure comprises 161 residues: uncharacterized protein (161 aa).

This is an uncharacterized protein from Rickettsia conorii (strain ATCC VR-613 / Malish 7).